An 836-amino-acid polypeptide reads, in one-letter code: Periostin (836 aa).

An N-terminal signal peptide occupies residues 1–21 (MIPFLPMFSLLLLLIVNPINA). The region spanning 40–94 (GPNVCALQQILGTKKKYFSTCKNWYKKSICGQKTTVLYECCPGYMRMEGMKGCPA) is the EMI domain. Disulfide bonds link Cys-44–Cys-80, Cys-69–Cys-333, Cys-79–Cys-92, Cys-208–Cys-311, and Cys-467–Cys-472. Cys-60 is subject to S-cysteinyl cysteine. FAS1 domains are found at residues 97–230 (PIDH…DRVL), 234–365 (GTSI…DQVL), 368–492 (DSAK…REII), and 496–628 (EKSL…DKLL). Asn-599 is a glycosylation site (N-linked (GlcNAc...) asparagine).

As to quaternary structure, homodimer. Interacts with BMP1 and fibronectin. Post-translationally, gamma-carboxylation is controversial. Gamma-carboxyglutamated; gamma-carboxyglutamate residues are formed by vitamin K dependent carboxylation; this may be required for calcium binding. According to a more recent report, does not contain vitamin K-dependent gamma-carboxyglutamate residues. As to expression, widely expressed with highest levels in aorta, stomach, lower gastrointestinal tract, placenta, uterus, thyroid tissue and breast. Expressed in the kidney. Expressed in the lung. Up-regulated in epithelial ovarian tumors. Not expressed in normal ovaries. Also highly expressed at the tumor periphery of lung carcinoma tissue but not within the tumor. Overexpressed in breast cancers.

The protein localises to the golgi apparatus. It localises to the secreted. It is found in the extracellular space. Its subcellular location is the extracellular matrix. Induces cell attachment and spreading and plays a role in cell adhesion. Enhances incorporation of BMP1 in the fibronectin matrix of connective tissues, and subsequent proteolytic activation of lysyl oxidase LOX. The sequence is that of Periostin (POSTN) from Homo sapiens (Human).